The sequence spans 322 residues: UPF0324 membrane protein BB4178 (322 aa).

The next 10 helical transmembrane spans lie at 13-35, 50-69, 76-98, 108-127, 139-161, 171-193, 209-231, 241-260, 273-292, and 296-318; these read FIRQ…YGNF, FTAR…NISI, GLPG…TVAG, TAML…VLAF, AVAV…VIYH, ALGI…ASNI, VALL…AAGA, VPWF…LDIL, VFVL…FAQI, and GPRV…YGIV.

This sequence belongs to the UPF0324 family.

It is found in the cell membrane. The chain is UPF0324 membrane protein BB4178 from Bordetella bronchiseptica (strain ATCC BAA-588 / NCTC 13252 / RB50) (Alcaligenes bronchisepticus).